A 127-amino-acid polypeptide reads, in one-letter code: MIELDYLTIAFGGAIGAVLRYLVSRTINSLLPFSYIPLGTIIVNSVGSFFLSFLMFAAIEKVPLSKEAILFFGTGLLGAFTTFSTFTYETLSLIEESPARGVAYALVNLLFAFTCAYFGMILGRGKV.

4 helical membrane-spanning segments follow: residues 4–24 (LDYL…YLVS), 39–59 (GTII…FAAI), 68–88 (AILF…TFTY), and 102–122 (VAYA…GMIL). 2 residues coordinate Na(+): glycine 78 and threonine 81.

This sequence belongs to the fluoride channel Fluc/FEX (TC 1.A.43) family.

It is found in the cell inner membrane. The catalysed reaction is fluoride(in) = fluoride(out). With respect to regulation, na(+) is not transported, but it plays an essential structural role and its presence is essential for fluoride channel function. Fluoride-specific ion channel. Important for reducing fluoride concentration in the cell, thus reducing its toxicity. This Thermotoga petrophila (strain ATCC BAA-488 / DSM 13995 / JCM 10881 / RKU-1) protein is Fluoride-specific ion channel FluC.